The chain runs to 316 residues: 1-aminocyclopropane-1-carboxylate oxidase 2 (316 aa).

Positions 153 to 253 (PNFGTKVSNY…RMSLASFYNP (101 aa)) constitute a Fe2OG dioxygenase domain. Fe cation is bound by residues histidine 177, aspartate 179, and histidine 234.

This sequence belongs to the iron/ascorbate-dependent oxidoreductase family. Fe cation is required as a cofactor. Leaves.

The catalysed reaction is 1-aminocyclopropane-1-carboxylate + L-ascorbate + O2 = ethene + L-dehydroascorbate + hydrogen cyanide + CO2 + 2 H2O. The protein operates within alkene biosynthesis; ethylene biosynthesis via S-adenosyl-L-methionine; ethylene from S-adenosyl-L-methionine: step 2/2. The polypeptide is 1-aminocyclopropane-1-carboxylate oxidase 2 (ACO2) (Solanum lycopersicum (Tomato)).